Consider the following 159-residue polypeptide: D-aminoacyl-tRNA deacylase (159 aa).

Residues 146-147 (GP) carry the Gly-cisPro motif, important for rejection of L-amino acids motif.

Belongs to the DTD family. Homodimer.

It is found in the cytoplasm. The catalysed reaction is glycyl-tRNA(Ala) + H2O = tRNA(Ala) + glycine + H(+). It catalyses the reaction a D-aminoacyl-tRNA + H2O = a tRNA + a D-alpha-amino acid + H(+). An aminoacyl-tRNA editing enzyme that deacylates mischarged D-aminoacyl-tRNAs. Also deacylates mischarged glycyl-tRNA(Ala), protecting cells against glycine mischarging by AlaRS. Acts via tRNA-based rather than protein-based catalysis; rejects L-amino acids rather than detecting D-amino acids in the active site. By recycling D-aminoacyl-tRNA to D-amino acids and free tRNA molecules, this enzyme counteracts the toxicity associated with the formation of D-aminoacyl-tRNA entities in vivo and helps enforce protein L-homochirality. This Bifidobacterium animalis subsp. lactis (strain AD011) protein is D-aminoacyl-tRNA deacylase.